Reading from the N-terminus, the 144-residue chain is Nucleoside diphosphate kinase (144 aa).

Residues Lys11, Phe59, Arg87, Thr93, Arg104, and Asn114 each contribute to the ATP site. The active-site Pros-phosphohistidine intermediate is His117.

The protein belongs to the NDK family. Homotetramer. Mg(2+) is required as a cofactor.

The protein localises to the cytoplasm. The catalysed reaction is a 2'-deoxyribonucleoside 5'-diphosphate + ATP = a 2'-deoxyribonucleoside 5'-triphosphate + ADP. It catalyses the reaction a ribonucleoside 5'-diphosphate + ATP = a ribonucleoside 5'-triphosphate + ADP. Major role in the synthesis of nucleoside triphosphates other than ATP. The ATP gamma phosphate is transferred to the NDP beta phosphate via a ping-pong mechanism, using a phosphorylated active-site intermediate. The protein is Nucleoside diphosphate kinase of Aliivibrio salmonicida (strain LFI1238) (Vibrio salmonicida (strain LFI1238)).